The chain runs to 330 residues: Inactive hydroxysteroid dehydrogenase-like protein 1 (330 aa).

Position 2 is an N-acetylalanine (A2). The required for mitochondria translocation stretch occupies residues 2–82; that stretch reads AAVDSFYLLY…SGATDGIGRA (81 aa). NADP(+) is bound by residues 74-80, D125, and K222; that span reads GATDGIG.

This sequence belongs to the short-chain dehydrogenases/reductases (SDR) family. 17-beta-HSD 3 subfamily. In terms of assembly, interacts with STYXL1.

It is found in the mitochondrion. This is Inactive hydroxysteroid dehydrogenase-like protein 1 (HSDL1) from Pongo abelii (Sumatran orangutan).